The following is a 502-amino-acid chain: ATP synthase subunit alpha (502 aa).

169-176 (GDRQTGKT) is an ATP binding site.

The protein belongs to the ATPase alpha/beta chains family. F-type ATPases have 2 components, CF(1) - the catalytic core - and CF(0) - the membrane proton channel. CF(1) has five subunits: alpha(3), beta(3), gamma(1), delta(1), epsilon(1). CF(0) has three main subunits: a(1), b(2) and c(9-12). The alpha and beta chains form an alternating ring which encloses part of the gamma chain. CF(1) is attached to CF(0) by a central stalk formed by the gamma and epsilon chains, while a peripheral stalk is formed by the delta and b chains.

It localises to the cell membrane. It carries out the reaction ATP + H2O + 4 H(+)(in) = ADP + phosphate + 5 H(+)(out). In terms of biological role, produces ATP from ADP in the presence of a proton gradient across the membrane. The alpha chain is a regulatory subunit. The sequence is that of ATP synthase subunit alpha from Staphylococcus aureus (strain bovine RF122 / ET3-1).